The chain runs to 570 residues: Dual specificity testis-specific protein kinase 2 (570 aa).

In terms of domain architecture, Protein kinase spans 58-313; sequence DFTREKIGSG…EIGKTLEEIM (256 aa). ATP is bound by residues 64-72 and lysine 87; that span reads IGSGFFSEV. The active-site Proton acceptor is the aspartate 176. A Phosphoserine; by autocatalysis modification is found at serine 219. A phosphoserine mark is found at serine 369, serine 456, and serine 460. The disordered stretch occupies residues 513–570; sequence DCSNPQEENGFVPRPKGTSPCSGAASEEMEVEEERPRRAPVHFSISGISLQTQGEQDG. A compositionally biased stretch (polar residues) spans 558-570; that stretch reads SGISLQTQGEQDG.

It belongs to the protein kinase superfamily. TKL Ser/Thr protein kinase family. Mg(2+) is required as a cofactor. The cofactor is Mn(2+). In terms of tissue distribution, predominantly expressed in testis and prostate. Found predominantly in non-germinal Sertoli cells.

Its subcellular location is the nucleus. The enzyme catalyses L-seryl-[protein] + ATP = O-phospho-L-seryl-[protein] + ADP + H(+). The catalysed reaction is L-threonyl-[protein] + ATP = O-phospho-L-threonyl-[protein] + ADP + H(+). It carries out the reaction L-tyrosyl-[protein] + ATP = O-phospho-L-tyrosyl-[protein] + ADP + H(+). With respect to regulation, activated by autophosphorylation on Ser-219. Functionally, dual specificity protein kinase activity catalyzing autophosphorylation and phosphorylation of exogenous substrates on both serine/threonine and tyrosine residues. Phosphorylates cofilin at 'Ser-3'. May play an important role in spermatogenesis. In Rattus norvegicus (Rat), this protein is Dual specificity testis-specific protein kinase 2 (Tesk2).